Reading from the N-terminus, the 280-residue chain is Ribosomal RNA small subunit methyltransferase A (280 aa).

Residues His15, Leu17, Gly42, Glu64, Asp89, and Asn109 each coordinate S-adenosyl-L-methionine.

Belongs to the class I-like SAM-binding methyltransferase superfamily. rRNA adenine N(6)-methyltransferase family. RsmA subfamily.

It localises to the cytoplasm. It carries out the reaction adenosine(1518)/adenosine(1519) in 16S rRNA + 4 S-adenosyl-L-methionine = N(6)-dimethyladenosine(1518)/N(6)-dimethyladenosine(1519) in 16S rRNA + 4 S-adenosyl-L-homocysteine + 4 H(+). In terms of biological role, specifically dimethylates two adjacent adenosines (A1518 and A1519) in the loop of a conserved hairpin near the 3'-end of 16S rRNA in the 30S particle. May play a critical role in biogenesis of 30S subunits. The polypeptide is Ribosomal RNA small subunit methyltransferase A (Synechococcus sp. (strain WH7803)).